A 724-amino-acid polypeptide reads, in one-letter code: MKKMNLITAALPYVNNIPHLGNLVQVLSADAFARYSKMSGIETLYICGTDEYGTATETKALIEKTTPLELCNKYYEIHKSIYKWFNIEFDIFGRTTNKHHQETVQNFFLKLEKNGYIKERETEQFFCNKDLIFLADRYVIGECPECQSMAKGDQCDNCSKLLNPTDLINPKCIICKNKPILKKTNHLYIDLPKIKTKLEKWIKNPTTSKNWNTNALKMTNAFLRDGLKERAITRDLKWGIPVPKKGYENKVFYVWFDAPIGYISITKNIVKNWESWWKNNKQVNLVQFIGKDNILFHTIMFPCIKIGSKENWTTLNQLSSSEYLNYENLKFSKSEGTGIFGNDVITTGIPSDVWRFYIYYNRPEKSDFQFIWQDLMERVNTELIDNFSNLVNRVLTFQKKFFGDVIETIEIQHKFWEQITPKYNKILNLFKNTELKSALKEILKISSFGNKIFQDNEPWKRKESSPQEIKELILNLIYLIRDLSILMMPFIPETSKKIQQFFGNSYQFSTKILGTKSGIKKIEFVEILFNKLEQKKINDLRLKYSGEKNMKEKEQPENLFREKVLLRVVKINKIERNPEAKNLFILKLDDGTNKDKQIVSSLEGYYTEEELLGKHIIIVDNLKPAKFRGIKSEGMLIAAEDKNKNFKIIIVEDSIKNPIAGERIILENDQNKDLTCPPKIDINKFSKANIITENGELKINGINLILEHSKNKILSKDIPNGIVC.

The 'HIGH' region signature appears at 12–22 (PYVNNIPHLGN). Zn(2+)-binding residues include Cys143, Cys146, Cys155, and Cys158. A 'KMSKS' region motif is present at residues 330–334 (KFSKS). Lys333 contacts ATP. The tRNA-binding domain maps to 560–665 (FREKVLLRVV…KNPIAGERII (106 aa)).

It belongs to the class-I aminoacyl-tRNA synthetase family. MetG type 1 subfamily. Homodimer. Zn(2+) serves as cofactor.

The protein resides in the cytoplasm. It carries out the reaction tRNA(Met) + L-methionine + ATP = L-methionyl-tRNA(Met) + AMP + diphosphate. In terms of biological role, is required not only for elongation of protein synthesis but also for the initiation of all mRNA translation through initiator tRNA(fMet) aminoacylation. This chain is Methionine--tRNA ligase, found in Borreliella afzelii (strain PKo) (Borrelia afzelii).